The following is a 167-amino-acid chain: NADH-ubiquinone oxidoreductase chain 4 (167 aa).

The next 3 helical transmembrane spans lie at 2–22 (FIGATTLMIAHGLTSSLLFCL), 44–64 (LLPLAATWWLLASLTNLALPP), and 86–106 (IILVGLNTLITALYSLYMLIM).

Belongs to the complex I subunit 4 family.

The protein resides in the mitochondrion membrane. The catalysed reaction is a ubiquinone + NADH + 5 H(+)(in) = a ubiquinol + NAD(+) + 4 H(+)(out). In terms of biological role, core subunit of the mitochondrial membrane respiratory chain NADH dehydrogenase (Complex I) that is believed to belong to the minimal assembly required for catalysis. Complex I functions in the transfer of electrons from NADH to the respiratory chain. The immediate electron acceptor for the enzyme is believed to be ubiquinone. This Carlito syrichta (Philippine tarsier) protein is NADH-ubiquinone oxidoreductase chain 4 (MT-ND4).